A 189-amino-acid polypeptide reads, in one-letter code: uncharacterized protein (189 aa).

The next 4 helical transmembrane spans lie at 49–69, 78–98, 102–122, and 124–144; these read LLGI…LFVF, LFHK…LSLF, LTIV…FPMI, and VSIA…LFPA. Residues 165 to 189 are disordered; it reads SSSAPDLNYPSLPTQSASPSQRFSA.

Belongs to the chlamydial CPn_0442/CT_006/TC_0274 family.

It localises to the cell membrane. This is an uncharacterized protein from Chlamydia trachomatis serovar D (strain ATCC VR-885 / DSM 19411 / UW-3/Cx).